A 273-amino-acid chain; its full sequence is Release factor glutamine methyltransferase (273 aa).

S-adenosyl-L-methionine contacts are provided by residues 109–113 (GTGSG), Asp132, Trp159, and Asn176. 176–179 (NPPY) is a substrate binding site.

This sequence belongs to the protein N5-glutamine methyltransferase family. PrmC subfamily.

The catalysed reaction is L-glutaminyl-[peptide chain release factor] + S-adenosyl-L-methionine = N(5)-methyl-L-glutaminyl-[peptide chain release factor] + S-adenosyl-L-homocysteine + H(+). Methylates the class 1 translation termination release factors RF1/PrfA and RF2/PrfB on the glutamine residue of the universally conserved GGQ motif. The chain is Release factor glutamine methyltransferase from Neisseria gonorrhoeae (strain ATCC 700825 / FA 1090).